A 73-amino-acid polypeptide reads, in one-letter code: Disintegrin barbourin (73 aa).

A Disintegrin domain is found at 1-73; sequence EAGEECDCGS…ADCPRNGLYG (73 aa). 6 disulfide bridges follow: cysteine 6-cysteine 21, cysteine 8-cysteine 16, cysteine 15-cysteine 38, cysteine 29-cysteine 35, cysteine 34-cysteine 59, and cysteine 47-cysteine 66. Residues 51–53 carry the Cell attachment site; atypical (KGD) motif; it reads KGD.

Belongs to the venom metalloproteinase (M12B) family. P-II subfamily. P-IIa sub-subfamily. As to quaternary structure, monomer. Expressed by the venom gland.

It localises to the secreted. Its function is as follows. Inhibitor of ligand binding to the integrins alpha-IIb/beta-3 (ITGA2B/ITGB3). Competition with fibrinogen for the RGD recognition sites on the alpha-IIb/beta-3 integrin results in the inhibition of platelet aggregation induced by ADP, thrombin, platelet-activating factor and collagen. The sequence is that of Disintegrin barbourin from Sistrurus miliarius barbouri (Dusky pigmy rattlesnake).